The following is a 207-amino-acid chain: Dephospho-CoA kinase (207 aa).

In terms of domain architecture, DPCK spans 4–203; sequence VIGLTGGIAS…EEGYIEKPNY (200 aa). 12-17 is a binding site for ATP; it reads ASGKST.

This sequence belongs to the CoaE family.

It is found in the cytoplasm. The catalysed reaction is 3'-dephospho-CoA + ATP = ADP + CoA + H(+). The protein operates within cofactor biosynthesis; coenzyme A biosynthesis; CoA from (R)-pantothenate: step 5/5. Functionally, catalyzes the phosphorylation of the 3'-hydroxyl group of dephosphocoenzyme A to form coenzyme A. This chain is Dephospho-CoA kinase, found in Staphylococcus aureus (strain bovine RF122 / ET3-1).